Here is a 605-residue protein sequence, read N- to C-terminus: Probable potassium transport system protein Kup (605 aa).

The next 12 helical transmembrane spans lie at 18-38, 46-66, 97-117, 138-158, 169-189, 204-224, 247-267, 287-307, 339-359, 368-388, 395-415, and 418-438; these read GLVFGDIGTSPIYTLTVIIAL, ILGIISLIVWTLIILVHLEYA, MAFVTFLTYLGVALLMGDGVI, GLSQNTLILIAGTIALFLFVF, AFGPIMVLWFAALALSGAISV, AISFLMHNGLPGFFVLSEVIL, AWYFVFVALVINYLGQGAFII, FYIPFLILTILATIIASQALI, IYIGSVNWLLLCLVILIMLVF, AYGFAVTGTMVITGIMMTMIF, WKVPLALFVTLVDVVFLVSNC, and LPHGGYWSLILASVPLAVILI.

This sequence belongs to the HAK/KUP transporter (TC 2.A.72) family.

The protein localises to the cell inner membrane. The catalysed reaction is K(+)(in) + H(+)(in) = K(+)(out) + H(+)(out). Its function is as follows. Transport of potassium into the cell. Likely operates as a K(+):H(+) symporter. The sequence is that of Probable potassium transport system protein Kup from Pelobacter propionicus (strain DSM 2379 / NBRC 103807 / OttBd1).